Reading from the N-terminus, the 468-residue chain is 6-phosphogluconate dehydrogenase, decarboxylating (468 aa).

Residues 9 to 14, 32 to 34, 73 to 75, and Asn101 contribute to the NADP(+) site; these read GLAVMG, NRS, and VKA. Residues Asn101 and 127–129 contribute to the substrate site; that span reads SGG. The active-site Proton acceptor is Lys182. Position 185-186 (185-186) interacts with substrate; it reads HN. Glu189 (proton donor) is an active-site residue. Tyr190, Lys259, Arg286, Arg444, and His450 together coordinate substrate.

Belongs to the 6-phosphogluconate dehydrogenase family. Homodimer.

It catalyses the reaction 6-phospho-D-gluconate + NADP(+) = D-ribulose 5-phosphate + CO2 + NADPH. It participates in carbohydrate degradation; pentose phosphate pathway; D-ribulose 5-phosphate from D-glucose 6-phosphate (oxidative stage): step 3/3. Its function is as follows. Catalyzes the oxidative decarboxylation of 6-phosphogluconate to ribulose 5-phosphate and CO(2), with concomitant reduction of NADP to NADPH. The protein is 6-phosphogluconate dehydrogenase, decarboxylating (gnd) of Staphylococcus epidermidis (strain ATCC 35984 / DSM 28319 / BCRC 17069 / CCUG 31568 / BM 3577 / RP62A).